Consider the following 348-residue polypeptide: Protein RecA (348 aa).

Residue 68-75 (GPESSGKT) participates in ATP binding.

The protein belongs to the RecA family.

The protein localises to the cytoplasm. Can catalyze the hydrolysis of ATP in the presence of single-stranded DNA, the ATP-dependent uptake of single-stranded DNA by duplex DNA, and the ATP-dependent hybridization of homologous single-stranded DNAs. It interacts with LexA causing its activation and leading to its autocatalytic cleavage. This is Protein RecA from Rhodococcus opacus (strain B4).